The chain runs to 236 residues: Phosphoribosylaminoimidazole-succinocarboxamide synthase (236 aa).

The protein belongs to the SAICAR synthetase family.

The enzyme catalyses 5-amino-1-(5-phospho-D-ribosyl)imidazole-4-carboxylate + L-aspartate + ATP = (2S)-2-[5-amino-1-(5-phospho-beta-D-ribosyl)imidazole-4-carboxamido]succinate + ADP + phosphate + 2 H(+). It functions in the pathway purine metabolism; IMP biosynthesis via de novo pathway; 5-amino-1-(5-phospho-D-ribosyl)imidazole-4-carboxamide from 5-amino-1-(5-phospho-D-ribosyl)imidazole-4-carboxylate: step 1/2. The chain is Phosphoribosylaminoimidazole-succinocarboxamide synthase from Streptococcus equi subsp. zooepidemicus (strain H70).